Reading from the N-terminus, the 93-residue chain is Integration host factor subunit beta (93 aa).

Belongs to the bacterial histone-like protein family. As to quaternary structure, heterodimer of an alpha and a beta chain.

Its function is as follows. This protein is one of the two subunits of integration host factor, a specific DNA-binding protein that functions in genetic recombination as well as in transcriptional and translational control. In Haemophilus ducreyi (strain 35000HP / ATCC 700724), this protein is Integration host factor subunit beta.